The primary structure comprises 1368 residues: DNA-directed RNA polymerase subunit beta (1368 aa).

This sequence belongs to the RNA polymerase beta chain family. The RNAP catalytic core consists of 2 alpha, 1 beta, 1 beta' and 1 omega subunit. When a sigma factor is associated with the core the holoenzyme is formed, which can initiate transcription.

The enzyme catalyses RNA(n) + a ribonucleoside 5'-triphosphate = RNA(n+1) + diphosphate. DNA-dependent RNA polymerase catalyzes the transcription of DNA into RNA using the four ribonucleoside triphosphates as substrates. This Burkholderia multivorans (strain ATCC 17616 / 249) protein is DNA-directed RNA polymerase subunit beta.